Reading from the N-terminus, the 95-residue chain is Small ribosomal subunit protein bS18 (95 aa).

Belongs to the bacterial ribosomal protein bS18 family. As to quaternary structure, part of the 30S ribosomal subunit. Forms a tight heterodimer with protein bS6.

Functionally, binds as a heterodimer with protein bS6 to the central domain of the 16S rRNA, where it helps stabilize the platform of the 30S subunit. The sequence is that of Small ribosomal subunit protein bS18 from Rickettsia felis (strain ATCC VR-1525 / URRWXCal2) (Rickettsia azadi).